We begin with the raw amino-acid sequence, 188 residues long: Ribosome-recycling factor (188 aa).

It belongs to the RRF family.

It is found in the cytoplasm. Functionally, responsible for the release of ribosomes from messenger RNA at the termination of protein biosynthesis. May increase the efficiency of translation by recycling ribosomes from one round of translation to another. This Anaeromyxobacter sp. (strain K) protein is Ribosome-recycling factor.